Consider the following 190-residue polypeptide: Ferric nitrobindin-like protein (190 aa).

A GXWXGXG motif is present at residues glycine 20–glycine 26.

It belongs to the nitrobindin family.

The chain is Ferric nitrobindin-like protein from Streptomyces griseus subsp. griseus (strain JCM 4626 / CBS 651.72 / NBRC 13350 / KCC S-0626 / ISP 5235).